Reading from the N-terminus, the 579-residue chain is Adenine/guanine permease AZG1 (579 aa).

The next 12 helical transmembrane spans lie at 52 to 72 (AGTA…SILS), 131 to 151 (LIVA…LMAN), 183 to 203 (TALA…AIGF), 221 to 241 (AGIG…IGLV), 260 to 280 (ISLA…AGGS), 292 to 312 (MESP…YCLV), 320 to 340 (IYGI…VTAF), 379 to 399 (FWEA…GTLY), 414 to 434 (FAGQ…GSLL), 459 to 479 (AITV…LASI), 480 to 500 (PAWA…KSVT), and 514 to 534 (FVTM…IGGI).

Belongs to the nucleobase:cation symporter-2 (NCS2) (TC 2.A.40) family. Azg-like subfamily.

The protein localises to the membrane. Its function is as follows. Transports natural purines (adenine and guanine) as well as purine analogs. Confers sensitivity to 8-azaadenine and 8-azaguanine (8-azg). This chain is Adenine/guanine permease AZG1 (AZG1), found in Arabidopsis thaliana (Mouse-ear cress).